The following is a 177-amino-acid chain: Thymidine kinase (177 aa).

An ATP-binding site is contributed by 11–18; sequence GPMFSGKS. The active-site Proton acceptor is Glu83. Residue Phe113 participates in substrate binding. Cys138 and Cys141 together coordinate Zn(2+). 157 to 161 contributes to the substrate binding site; sequence IEIIG. Residues Cys170 and Cys173 each contribute to the Zn(2+) site.

The protein belongs to the thymidine kinase family. In terms of assembly, homotetramer. Two molecules of substrate bind to each enzyme tetramer.

It carries out the reaction thymidine + ATP = dTMP + ADP + H(+). Its function is as follows. Phosphorylates thymidine and thymidine analogs, such as azidothymidine (AZT). Part of the salvage pathway for pyrimidine deoxyribonucleotide synthesis. In Vaccinia virus (strain Tian Tan) (VACV), this protein is Thymidine kinase (OPG101).